Consider the following 297-residue polypeptide: Ribosomal RNA small subunit methyltransferase A (297 aa).

Residues Asn31, Leu33, Gly58, Glu79, Asp104, and Asn129 each contribute to the S-adenosyl-L-methionine site.

The protein belongs to the class I-like SAM-binding methyltransferase superfamily. rRNA adenine N(6)-methyltransferase family. RsmA subfamily.

The protein localises to the cytoplasm. It carries out the reaction adenosine(1518)/adenosine(1519) in 16S rRNA + 4 S-adenosyl-L-methionine = N(6)-dimethyladenosine(1518)/N(6)-dimethyladenosine(1519) in 16S rRNA + 4 S-adenosyl-L-homocysteine + 4 H(+). Specifically dimethylates two adjacent adenosines (A1518 and A1519) in the loop of a conserved hairpin near the 3'-end of 16S rRNA in the 30S particle. May play a critical role in biogenesis of 30S subunits. The protein is Ribosomal RNA small subunit methyltransferase A of Staphylococcus aureus (strain bovine RF122 / ET3-1).